A 180-amino-acid chain; its full sequence is NADH-ubiquinone oxidoreductase chain 5 (180 aa).

The chain crosses the membrane as a helical span at residues 131-148 (VYHYAFAMLLGSTPFVTF).

The protein belongs to the complex I subunit 5 family.

The protein resides in the mitochondrion inner membrane. The enzyme catalyses a ubiquinone + NADH + 5 H(+)(in) = a ubiquinol + NAD(+) + 4 H(+)(out). In terms of biological role, core subunit of the mitochondrial membrane respiratory chain NADH dehydrogenase (Complex I) that is believed to belong to the minimal assembly required for catalysis. Complex I functions in the transfer of electrons from NADH to the respiratory chain. The immediate electron acceptor for the enzyme is believed to be ubiquinone. This is NADH-ubiquinone oxidoreductase chain 5 (ND5) from Zea mays (Maize).